A 72-amino-acid chain; its full sequence is MIIPWKELDPATLDSLIESFVLREGTDYGEHERSLEQKVADVRRQLSSGEVVLVWSELHESVNIMPRGQFHD.

It belongs to the UPF0270 family.

This is UPF0270 protein ETA_31870 from Erwinia tasmaniensis (strain DSM 17950 / CFBP 7177 / CIP 109463 / NCPPB 4357 / Et1/99).